Reading from the N-terminus, the 449-residue chain is Phosphoribosylamine--glycine ligase (449 aa).

The 214-residue stretch at 112–325 folds into the ATP-grasp domain; that stretch reads RELMEKYDIP…IVTLHASIAE (214 aa). 139–202 provides a ligand contact to ATP; it reads IDELGKPVAV…EEKCVGEEYT (64 aa). Residues Gln-283, Glu-295, and Asn-297 each contribute to the Mg(2+) site. The Mn(2+) site is built by Gln-283, Glu-295, and Asn-297.

It belongs to the GARS family. The cofactor is Mg(2+). Mn(2+) is required as a cofactor.

It catalyses the reaction 5-phospho-beta-D-ribosylamine + glycine + ATP = N(1)-(5-phospho-beta-D-ribosyl)glycinamide + ADP + phosphate + H(+). Its pathway is purine metabolism; IMP biosynthesis via de novo pathway; N(1)-(5-phospho-D-ribosyl)glycinamide from 5-phospho-alpha-D-ribose 1-diphosphate: step 2/2. The sequence is that of Phosphoribosylamine--glycine ligase from Methanopyrus kandleri (strain AV19 / DSM 6324 / JCM 9639 / NBRC 100938).